The following is a 711-amino-acid chain: Polyribonucleotide nucleotidyltransferase (711 aa).

Residues D486 and D492 each contribute to the Mg(2+) site. Positions 553–612 constitute a KH domain; that stretch reads PRIHTIKINPDKIKDVIGKGGSVIRALTEETGTTIEIEDDGTVKIAATDGEKAKHAIRRI. An S1 motif domain is found at 622-690; sequence GRVYTGKVTR…RQGRIRLSIK (69 aa). A disordered region spans residues 689-711; that stretch reads IKEATEQSQPAAAPEAPAAEQGE. Low complexity predominate over residues 694–711; it reads EQSQPAAAPEAPAAEQGE.

It belongs to the polyribonucleotide nucleotidyltransferase family. In terms of assembly, component of the RNA degradosome, which is a multiprotein complex involved in RNA processing and mRNA degradation. It depends on Mg(2+) as a cofactor.

The protein localises to the cytoplasm. The catalysed reaction is RNA(n+1) + phosphate = RNA(n) + a ribonucleoside 5'-diphosphate. Involved in mRNA degradation. Catalyzes the phosphorolysis of single-stranded polyribonucleotides processively in the 3'- to 5'-direction. This is Polyribonucleotide nucleotidyltransferase from Shigella boydii serotype 4 (strain Sb227).